The chain runs to 285 residues: MLRIAVPNKGSLSGPAGEMLHEAGYQQRRESKELRIVDPVNEVEFFYLRPRDIAIYVSSGKLDIGITGRDLLVDSGAHAEEILPLGFARSTFRFAGKPGAATGIDDLKGRTVATSYEGIVAAHLADRGVDASVVHLDGAVETAIELGVAEVIADVVETGTSLRNAGLEVFGEPIMKSEAVVIRRSDAEPDETTEPKVQQFLRRLQGVLVARTYVMMDYDCRVEQLEKAVALTPGLESPTVSPLHNEGWVAVRAMVPAKEAQRIMDDLYEIGARAILTTAIHACRL.

The protein belongs to the ATP phosphoribosyltransferase family. Long subfamily. It depends on Mg(2+) as a cofactor.

It is found in the cytoplasm. The catalysed reaction is 1-(5-phospho-beta-D-ribosyl)-ATP + diphosphate = 5-phospho-alpha-D-ribose 1-diphosphate + ATP. Its pathway is amino-acid biosynthesis; L-histidine biosynthesis; L-histidine from 5-phospho-alpha-D-ribose 1-diphosphate: step 1/9. Its activity is regulated as follows. Feedback inhibited by histidine. Functionally, catalyzes the condensation of ATP and 5-phosphoribose 1-diphosphate to form N'-(5'-phosphoribosyl)-ATP (PR-ATP). Has a crucial role in the pathway because the rate of histidine biosynthesis seems to be controlled primarily by regulation of HisG enzymatic activity. The protein is ATP phosphoribosyltransferase of Streptomyces coelicolor (strain ATCC BAA-471 / A3(2) / M145).